We begin with the raw amino-acid sequence, 109 residues long: Cell division protein FtsL (109 aa).

Residues 1-3 (MSR) are Cytoplasmic-facing. The helical transmembrane segment at 4-21 (LNIFLLIIVMGCALSVVN) threads the bilayer. The Periplasmic portion of the chain corresponds to 22–109 (STNQQRQIFI…ASAAPTGGAR (88 aa)).

Belongs to the FtsL family. Part of a complex composed of FtsB, FtsL and FtsQ.

It is found in the cell inner membrane. In terms of biological role, essential cell division protein. May link together the upstream cell division proteins, which are predominantly cytoplasmic, with the downstream cell division proteins, which are predominantly periplasmic. This is Cell division protein FtsL from Burkholderia pseudomallei (strain K96243).